The chain runs to 475 residues: Ribulose bisphosphate carboxylase large chain (475 aa).

The propeptide occupies 1-2; that stretch reads MS. The residue at position 3 (Pro3) is an N-acetylproline. An N6,N6,N6-trimethyllysine modification is found at Lys14. Residues Asn123 and Thr173 each coordinate substrate. The active-site Proton acceptor is the Lys175. Residue Lys177 coordinates substrate. The Mg(2+) site is built by Lys201, Asp203, and Glu204. The residue at position 201 (Lys201) is an N6-carboxylysine. His294 functions as the Proton acceptor in the catalytic mechanism. The substrate site is built by Arg295, His327, and Ser379.

This sequence belongs to the RuBisCO large chain family. Type I subfamily. In terms of assembly, heterohexadecamer of 8 large chains and 8 small chains; disulfide-linked. The disulfide link is formed within the large subunit homodimers. It depends on Mg(2+) as a cofactor. In terms of processing, the disulfide bond which can form in the large chain dimeric partners within the hexadecamer appears to be associated with oxidative stress and protein turnover.

The protein resides in the plastid. Its subcellular location is the chloroplast. The enzyme catalyses 2 (2R)-3-phosphoglycerate + 2 H(+) = D-ribulose 1,5-bisphosphate + CO2 + H2O. It catalyses the reaction D-ribulose 1,5-bisphosphate + O2 = 2-phosphoglycolate + (2R)-3-phosphoglycerate + 2 H(+). Functionally, ruBisCO catalyzes two reactions: the carboxylation of D-ribulose 1,5-bisphosphate, the primary event in carbon dioxide fixation, as well as the oxidative fragmentation of the pentose substrate in the photorespiration process. Both reactions occur simultaneously and in competition at the same active site. The sequence is that of Ribulose bisphosphate carboxylase large chain from Platanus occidentalis (Sycamore).